The chain runs to 464 residues: Vacuolar protein sorting-associated protein atg6 (464 aa).

The interval 38-57 (SLTEMNESGESDDQMNSSSE) is disordered. Residues 144–274 (VECAELLTEE…NSRKLEKLQK (131 aa)) adopt a coiled-coil conformation. The BARA stretch occupies residues 275-461 (MNVFSDIFYI…EAYVSSQDKQ (187 aa)).

Belongs to the beclin family. As to quaternary structure, component of the autophagy-specific vps34 PI3-kinase complex I composed of vps15, atg6, pik3/vps34, atg14 and atg38. Also a component of the vps34 PI3-kinase complex II composed of atg6, pik3, vps15 and vps38.

It localises to the endosome membrane. It is found in the vacuole membrane. The protein resides in the preautophagosomal structure membrane. Its subcellular location is the cytoplasm. In terms of biological role, functions as a part of the autophagy-specific VPS34 PI3-kinase complex I that plays a role in autophagosome assembly. This complex is essential to recruit the atg8-phosphatidylinositol conjugate and the atg12-atg5 conjugate to the pre-autophagosomal structure. Also functions as part of the VPS34 PI3-kinase complex II. The protein is Vacuolar protein sorting-associated protein atg6 (atg6) of Schizosaccharomyces pombe (strain 972 / ATCC 24843) (Fission yeast).